Consider the following 144-residue polypeptide: Large ribosomal subunit protein uL11 (144 aa).

Belongs to the universal ribosomal protein uL11 family. As to quaternary structure, part of the ribosomal stalk of the 50S ribosomal subunit. Interacts with L10 and the large rRNA to form the base of the stalk. L10 forms an elongated spine to which L12 dimers bind in a sequential fashion forming a multimeric L10(L12)X complex. In terms of processing, one or more lysine residues are methylated.

Forms part of the ribosomal stalk which helps the ribosome interact with GTP-bound translation factors. This is Large ribosomal subunit protein uL11 from Nocardia farcinica (strain IFM 10152).